The following is a 526-amino-acid chain: MFRHAFSKSSPAFLAGGSAIGGAIAGLMWSGERNTSSSTACDSSEPSNQSVIGLLQELSRKVNNLESLVGGNPGSFPARSTSSVTKSGTQYGIDIVLGAQWGDEGKGKLVDLLSQDYDVCARVAGGSNAGHTIVVQGKKYKFHLLPSGVLNPNATCVIGNGVVIHIPSFLNELDSLEASGVDYQGRVYISDRAHLVFDFHQEVDGRQEDRLGRHKIGTTKKGIGPAYSSKINRNGLRVGDLQNWDHFERRFRELCTHHERSYEGLKIDVDNQLAFYKTVAERVNSMTIDTIDYTNKQFEAGKRILVEGANATMLDIDFGTYPYVTSSNPSVGSVLTGLGVSPGKLRGIYGTVKAYCTRVGEGPFPTELPLDEGTPGEHLSQVGAEYGTTTGRTRRCGWLDIPQMKYSALINGFTSINLTKVDVFTGMPEVKIGKAYLHNGKYLSSMPASLDVLSNVGVEYEVLPGWSEDISNCKKFEELPENCQKYILRVQELLGIPIRWIGVGPNRADVIDRGEGWDLATAGTNQ.

GTP contacts are provided by residues 102 to 108 (GDEGKGK) and 130 to 132 (GHT). D103 (proton acceptor) is an active-site residue. Positions 103 and 130 each coordinate Mg(2+). IMP contacts are provided by residues 103 to 106 (DEGK), 128 to 131 (NAGH), T219, R233, N310, T325, and R392. H131 (proton donor) is an active-site residue. 388–394 (TTTGRTR) is a binding site for substrate. GTP contacts are provided by residues R394, 420–422 (KVD), and 502–504 (GVG).

The protein belongs to the adenylosuccinate synthetase family. Homodimer. Mg(2+) is required as a cofactor.

It is found in the cytoplasm. It carries out the reaction IMP + L-aspartate + GTP = N(6)-(1,2-dicarboxyethyl)-AMP + GDP + phosphate + 2 H(+). The protein operates within purine metabolism; AMP biosynthesis via de novo pathway; AMP from IMP: step 1/2. Functionally, plays an important role in the de novo pathway and in the salvage pathway of purine nucleotide biosynthesis. Catalyzes the first committed step in the biosynthesis of AMP from IMP. The polypeptide is Adenylosuccinate synthetase (Phaeodactylum tricornutum (strain CCAP 1055/1)).